Reading from the N-terminus, the 76-residue chain is Putative UPF0377 protein YGL260W (76 aa).

This sequence belongs to the UPF0377 family.

The polypeptide is Putative UPF0377 protein YGL260W (Saccharomyces cerevisiae (strain ATCC 204508 / S288c) (Baker's yeast)).